The primary structure comprises 299 residues: Palmitoyltransferase ZDHHC3 (299 aa).

Over 1–47 the chain is Cytoplasmic; the sequence is MMLIPTHHFRNIERKPEYLQPEKCVPPPYPGPVGTMWFIRDGCGIAC. Y18 is subject to Phosphotyrosine. The chain crosses the membrane as a helical span at residues 48-68; sequence AIVTWFLVLYAEFVVLFVMLI. Topologically, residues 69-72 are extracellular; it reads PSRD. Residues 73–93 traverse the membrane as a helical segment; the sequence is YVYSIINGIVFNLLAFLALAS. Residues 94 to 171 are Cytoplasmic-facing; the sequence is HCRAMLTDPG…NCVGENNQKY (78 aa). A DHHC domain is found at 127–177; sequence YKCPKCCSIKPDRAHHCSVCKRCIRKMDHHCPWVNNCVGENNQKYFVLFTM. A lipid anchor (S-palmitoyl cysteine) is attached at C146. The active-site S-palmitoyl cysteine intermediate is the C157. Residues 172–192 traverse the membrane as a helical segment; that stretch reads FVLFTMYIALISLHALIMVGF. Topologically, residues 193–214 are extracellular; that stretch reads HFLHCFEEDWTKCSSFSPPTTV. The chain crosses the membrane as a helical span at residues 215–235; that stretch reads ILLILLCFEGLLFLIFTSVMF. Residues 236-299 are Cytoplasmic-facing; sequence GTQVHSICTD…GKADPYQYVV (64 aa).

The protein belongs to the DHHC palmitoyltransferase family. As to quaternary structure, monomer. Homooligomers. The monomeric form has a higher catalytic activity. Forms heterooligomers with ZDHHC7. Interacts with TNFRSF10A. Autopalmitoylated. In terms of processing, phosphorylation by FGFR1 and SRC probably regulates the palmitoyltransferase activity. In terms of tissue distribution, widely expressed with significant expression in heart, lung, liver, skeletal muscle, kidney, testis, thymus, small intestine and leukocyte.

It is found in the golgi apparatus membrane. The catalysed reaction is L-cysteinyl-[protein] + hexadecanoyl-CoA = S-hexadecanoyl-L-cysteinyl-[protein] + CoA. It catalyses the reaction L-cysteinyl-[protein] + tetradecanoyl-CoA = S-tetradecanoyl-L-cysteinyl-[protein] + CoA. The enzyme catalyses L-cysteinyl-[protein] + octadecanoyl-CoA = S-octadecanoyl-L-cysteinyl-[protein] + CoA. Golgi-localized palmitoyltransferase that catalyzes the addition of palmitate onto various protein substrates. Has no stringent fatty acid selectivity and in addition to palmitate can also transfer onto target proteins myristate from tetradecanoyl-CoA and stearate from octadecanoyl-CoA. Plays an important role in G protein-coupled receptor signaling pathways involving GNAQ and potentially other heterotrimeric G proteins by regulating their dynamic association with the plasma membrane. Palmitoylates ITGA6 and ITGB4, thereby regulating the alpha-6/beta-4 integrin localization, expression and function in cell adhesion to laminin. Plays a role in the TRAIL-activated apoptotic signaling pathway most probably through the palmitoylation and localization to the plasma membrane of TNFRSF10A. In the brain, by palmitoylating the gamma subunit GABRG2 of GABA(A) receptors and regulating their postsynaptic accumulation, plays a role in synaptic GABAergic inhibitory function and GABAergic innervation. Palmitoylates the neuronal protein GAP43 which is also involved in the formation of GABAergic synapses. Palmitoylates NCDN thereby regulating its association with endosome membranes. Probably palmitoylates PRCD and is involved in its proper localization within the photoreceptor. Could mediate the palmitoylation of NCAM1 and regulate neurite outgrowth. Could palmitoylate DNAJC5 and regulate its localization to Golgi membranes. Also constitutively palmitoylates DLG4. May also palmitoylate SNAP25. Could palmitoylate the glutamate receptors GRIA1 and GRIA2 but this has not been confirmed in vivo. Could also palmitoylate the D(2) dopamine receptor DRD2. May also palmitoylate LAMTOR1, promoting its localization to lysosomal membranes. Palmitoylates the Toll-like receptor 9/TLR9 in the Golgi and thereby regulates TLR9 trafficking to endosomes. May palmitoylate CALHM1 and CALHM3 subunits of gustatory voltage-gated ion channels and modulate channel gating and kinetics. In terms of biological role, may also function as a calcium transporter. This Homo sapiens (Human) protein is Palmitoyltransferase ZDHHC3.